The chain runs to 809 residues: uncharacterized protein (809 aa).

Residues 19 to 206 (HDLRLVLVAS…FTGMSAITIV (188 aa)) enclose the MHYT domain. The next 7 membrane-spanning stretches (helical) occupy residues 23–43 (LVLVASAVCLAGCFTTFRLYS), 57–77 (LLLTGLVAGSSVWATHFIAMV), 92–112 (TLLSLMIAALFMASGFAVASA), 122–142 (GGVLIGLGVAAMHYMGMSAFV), 152–172 (ATVGMSAVLGVGGATAALLLA), 186–206 (GMLCLGIVMLHFTGMSAITIV), and 224–244 (TLAVGSITSMIILGGLGAVAI). The PAS domain occupies 254–317 (ERIRRLANAA…ADPSREDVRR (64 aa)). The region spanning 402-536 (ESLAVICIDL…GRGVYRFFKR (135 aa)) is the GGDEF domain. In terms of domain architecture, EAL spans 545–795 (RRNLARDLRQ…ALTMWTTAGD (251 aa)).

It is found in the cell membrane. This is an uncharacterized protein from Caulobacter vibrioides (strain ATCC 19089 / CIP 103742 / CB 15) (Caulobacter crescentus).